We begin with the raw amino-acid sequence, 229 residues long: MIDHTHLRLFQFCDSQFPTGAFSHSFGLETYIQRNIIHDDHTFIAWLKMFLQEQLTYSDGLAMRLVYDALENDDTQKVLHIDKLMFVQNLPKETRVGAKQMGTRMVKLALELYNSPWIAWYHQQMQDKKAKLNPAICFTMLGHHLGVDIETIIDYYLYQNVSSLTQNAVRAIPLGQTAGQKIVTHMIPYIEETRKQIFELKEADFGMTAPGLELNQMAHENVNVRIFIS.

It belongs to the UreF family. UreD, UreF and UreG form a complex that acts as a GTP-hydrolysis-dependent molecular chaperone, activating the urease apoprotein by helping to assemble the nickel containing metallocenter of UreC. The UreE protein probably delivers the nickel.

The protein resides in the cytoplasm. Functionally, required for maturation of urease via the functional incorporation of the urease nickel metallocenter. In Staphylococcus aureus (strain JH1), this protein is Urease accessory protein UreF.